Here is a 65-residue protein sequence, read N- to C-terminus: Large ribosomal subunit protein bL33m (65 aa).

This sequence belongs to the bacterial ribosomal protein bL33 family. As to quaternary structure, component of the mitochondrial ribosome large subunit (39S) which comprises a 16S rRNA and about 50 distinct proteins.

The protein resides in the mitochondrion. The protein is Large ribosomal subunit protein bL33m (mRpL33) of Anopheles gambiae (African malaria mosquito).